Consider the following 1224-residue polypeptide: ATP-dependent helicase/nuclease subunit A (1224 aa).

Residues 15 to 480 form the UvrD-like helicase ATP-binding domain; sequence VIWTDAQWQS…IDLSQNFRSR (466 aa). Residue 36–43 coordinates ATP; the sequence is AAAGSGKT. The region spanning 497–791 is the UvrD-like helicase C-terminal domain; the sequence is EQVGEISYDD…RMMTIHSSKG (295 aa).

This sequence belongs to the helicase family. AddA subfamily. In terms of assembly, heterodimer of AddA and AddB/RexB. Requires Mg(2+) as cofactor.

The catalysed reaction is Couples ATP hydrolysis with the unwinding of duplex DNA by translocating in the 3'-5' direction.. It carries out the reaction ATP + H2O = ADP + phosphate + H(+). In terms of biological role, the heterodimer acts as both an ATP-dependent DNA helicase and an ATP-dependent, dual-direction single-stranded exonuclease. Recognizes the chi site generating a DNA molecule suitable for the initiation of homologous recombination. The AddA nuclease domain is required for chi fragment generation; this subunit has the helicase and 3' -&gt; 5' nuclease activities. The sequence is that of ATP-dependent helicase/nuclease subunit A from Staphylococcus epidermidis (strain ATCC 12228 / FDA PCI 1200).